Consider the following 1207-residue polypeptide: DNA-directed RNA polymerase subunit beta' (1207 aa).

Zn(2+) is bound by residues C60, C62, C75, and C78. Mg(2+) contacts are provided by D450, D452, and D454. Residues C819, C893, C900, and C903 each coordinate Zn(2+).

Belongs to the RNA polymerase beta' chain family. In terms of assembly, the RNAP catalytic core consists of 2 alpha, 1 beta, 1 beta' and 1 omega subunit. When a sigma factor is associated with the core the holoenzyme is formed, which can initiate transcription. The cofactor is Mg(2+). Zn(2+) serves as cofactor.

It catalyses the reaction RNA(n) + a ribonucleoside 5'-triphosphate = RNA(n+1) + diphosphate. Its function is as follows. DNA-dependent RNA polymerase catalyzes the transcription of DNA into RNA using the four ribonucleoside triphosphates as substrates. This is DNA-directed RNA polymerase subunit beta' from Streptococcus pyogenes serotype M3 (strain SSI-1).